Reading from the N-terminus, the 408-residue chain is Probable acyl-CoA dehydrogenase 6 (408 aa).

The active-site Proton acceptor is the Glu-265.

The protein belongs to the acyl-CoA dehydrogenase family. As to quaternary structure, homotetramer. Requires FAD as cofactor.

It carries out the reaction 3-methylbutanoyl-CoA + oxidized [electron-transfer flavoprotein] + H(+) = 3-methylbut-2-enoyl-CoA + reduced [electron-transfer flavoprotein]. The protein operates within amino-acid degradation; L-leucine degradation; (S)-3-hydroxy-3-methylglutaryl-CoA from 3-isovaleryl-CoA: step 1/3. This chain is Probable acyl-CoA dehydrogenase 6 (acdh-6), found in Caenorhabditis elegans.